We begin with the raw amino-acid sequence, 342 residues long: MASVTRAVFGELPSGGGTVEKFQLQSDLLRVDIISWGCTITALEVKDRQGRASDVVLGFAELEGYLQKQPYFGAVIGRVANRIAKGTFKVDGKEYHLAINKEPNSLHGGVRGFDKVLWTPRVLSNGVQFSRISPDGEEGYPGELKVWVTYTLDGGELIVNYRAQASQATPVNLTNHSYFNLAGQASPNINDHEVTIEADTYLPVDETLIPTGEVAPVQGTAFDLRKPVELGKHLQDFHLNGFDHNFCLKGSKEKHFCARVHHAASGRVLEVYTTQPGVQFYTGNFLDGTLKGKNGAVYPKHSGFCLETQNWPDAVNQPRFPPVLLRPGEEYDHTTWFKFSVA.

A2 carries the N-acetylalanine modification. S14 is modified (phosphoserine). Beta-D-galactose contacts are provided by residues 81-82 and H107; that span reads NR. The residue at position 124 (S124) is a Phosphoserine. The active-site Proton donor is H176. Beta-D-galactose contacts are provided by residues 176–178, D243, Q279, and E307; that span reads HSY. E307 serves as the catalytic Proton acceptor.

It belongs to the aldose epimerase family. In terms of assembly, monomer.

The protein localises to the cytoplasm. It carries out the reaction alpha-D-galactose = beta-D-galactose. The enzyme catalyses alpha-D-glucose = beta-D-glucose. It participates in carbohydrate metabolism; hexose metabolism. The protein operates within carbohydrate metabolism; galactose metabolism. Mutarotase that catalyzes the interconversion of beta-D-galactose and alpha-D-galactose during galactose metabolism. Beta-D-galactose is metabolized in the liver into glucose 1-phosphate, the primary metabolic fuel, by the action of four enzymes that constitute the Leloir pathway: GALM, GALK1 (galactokinase), GALT (galactose-1-phosphate uridylyltransferase) and GALE (UDP-galactose-4'-epimerase). Involved in the maintenance of the equilibrium between the beta- and alpha-anomers of galactose, therefore ensuring a sufficient supply of the alpha-anomer for GALK1. Also active on D-glucose although shows a preference for galactose over glucose. The polypeptide is Galactose mutarotase (Homo sapiens (Human)).